Consider the following 190-residue polypeptide: Endoribonuclease YbeY (190 aa).

A disordered region spans residues 1–25; it reads MSQPRPGHRPDCNGADPDSNFASMT. 3 residues coordinate Zn(2+): H147, H151, and H157.

It belongs to the endoribonuclease YbeY family. Requires Zn(2+) as cofactor.

The protein localises to the cytoplasm. In terms of biological role, single strand-specific metallo-endoribonuclease involved in late-stage 70S ribosome quality control and in maturation of the 3' terminus of the 16S rRNA. This Rhodopseudomonas palustris (strain ATCC BAA-98 / CGA009) protein is Endoribonuclease YbeY.